Here is a 181-residue protein sequence, read N- to C-terminus: MRVLLLGPPGAGKGTQAVKLAEKLGIPQISTGELFRRNIEEGTKLGVEAKRYLDAGDLVPSDLTNELVDDRLNNPDAANGFILDGYPRSVEQAKALHEMLERRGTDIDAVLEFRVSEEVLLERLKGRGRADDTDDVILNRMKVYRDETAPLLEYYRDQLKTVDAVGTMDEVFARALRALGK.

10 to 15 contacts ATP; the sequence is GAGKGT. The segment at 30-59 is NMP; it reads STGELFRRNIEEGTKLGVEAKRYLDAGDLV. AMP-binding positions include Thr-31, Arg-36, 57 to 59, 85 to 88, and Gln-92; these read DLV and GYPR. Residues 126–132 are LID; the sequence is GRGRADD. An ATP-binding site is contributed by Arg-127. AMP is bound by residues Arg-129 and Arg-140. Residue Gly-166 participates in ATP binding.

Belongs to the adenylate kinase family. In terms of assembly, monomer.

Its subcellular location is the cytoplasm. The enzyme catalyses AMP + ATP = 2 ADP. The protein operates within purine metabolism; AMP biosynthesis via salvage pathway; AMP from ADP: step 1/1. Its function is as follows. Catalyzes the reversible transfer of the terminal phosphate group between ATP and AMP. Plays an important role in cellular energy homeostasis and in adenine nucleotide metabolism. This is Adenylate kinase from Mycobacterium tuberculosis (strain ATCC 25177 / H37Ra).